We begin with the raw amino-acid sequence, 241 residues long: 1-(5-phosphoribosyl)-5-[(5-phosphoribosylamino)methylideneamino] imidazole-4-carboxamide isomerase (241 aa).

Aspartate 10 serves as the catalytic Proton acceptor. The Proton donor role is filled by aspartate 131.

It belongs to the HisA/HisF family.

It is found in the cytoplasm. The enzyme catalyses 1-(5-phospho-beta-D-ribosyl)-5-[(5-phospho-beta-D-ribosylamino)methylideneamino]imidazole-4-carboxamide = 5-[(5-phospho-1-deoxy-D-ribulos-1-ylimino)methylamino]-1-(5-phospho-beta-D-ribosyl)imidazole-4-carboxamide. The protein operates within amino-acid biosynthesis; L-histidine biosynthesis; L-histidine from 5-phospho-alpha-D-ribose 1-diphosphate: step 4/9. The polypeptide is 1-(5-phosphoribosyl)-5-[(5-phosphoribosylamino)methylideneamino] imidazole-4-carboxamide isomerase (Bifidobacterium longum subsp. infantis (strain ATCC 15697 / DSM 20088 / JCM 1222 / NCTC 11817 / S12)).